Consider the following 320-residue polypeptide: MPDPMRSYLDFEKPVAELDSKIDELHALAAGGSNIGEEIAKIEEKALAALTELYAALTPWQKTQVARHPQRPHCVDYIEGLITEFTPLAGDRKFGEDEALIGGFGRFRGESVCVLGQEKGFSTETRLKHNFGMARPEGYRKAVRLMEMADRFGLPVLSLVDTAGAYPGIGAEERGQAEAIARSTEACLKLGVPNVAVVIGEGGSGGAIAIATANKVLMLEHAIYSVISPEAASSILWRDSSKAQEAATSMKITAQDLLRFGVIDQILTEPRGGAHRDSAAMIAKAGDAIAKSFADLSSLDSDAIRAQRRQKFLDIGRKLG.

The CoA carboxyltransferase C-terminal domain maps to 42–295 (IEEKALAALT…GDAIAKSFAD (254 aa)).

It belongs to the AccA family. In terms of assembly, acetyl-CoA carboxylase is a heterohexamer composed of biotin carboxyl carrier protein (AccB), biotin carboxylase (AccC) and two subunits each of ACCase subunit alpha (AccA) and ACCase subunit beta (AccD).

Its subcellular location is the cytoplasm. The catalysed reaction is N(6)-carboxybiotinyl-L-lysyl-[protein] + acetyl-CoA = N(6)-biotinyl-L-lysyl-[protein] + malonyl-CoA. The protein operates within lipid metabolism; malonyl-CoA biosynthesis; malonyl-CoA from acetyl-CoA: step 1/1. Functionally, component of the acetyl coenzyme A carboxylase (ACC) complex. First, biotin carboxylase catalyzes the carboxylation of biotin on its carrier protein (BCCP) and then the CO(2) group is transferred by the carboxyltransferase to acetyl-CoA to form malonyl-CoA. The polypeptide is Acetyl-coenzyme A carboxylase carboxyl transferase subunit alpha (Rhodopseudomonas palustris (strain BisA53)).